The sequence spans 716 residues: Interleukin-31 receptor subunit alpha (716 aa).

The signal sequence occupies residues 1–18; that stretch reads MWTLALWAFSFLCKFSLA. At 19-499 the chain is on the extracellular side; the sequence is VLPTKPENIS…TNGVRINFKT (481 aa). Fibronectin type-III domains lie at 23–115, 117–211, 213–304, 305–403, and 408–502; these read KPEN…IAKT, PPII…TMEE, PHVL…ILRI, PDVH…QAYA, and PLKG…TLSI. Residues Asn-36, Asn-48, and Asn-64 are each glycosylated (N-linked (GlcNAc...) asparagine). A glycan (N-linked (GlcNAc...) asparagine) is linked at Asn-382. Residues 500–520 form a helical membrane-spanning segment; sequence LSISVFEIVLLTSLVGGGLLL. Over 521-716 the chain is Cytoplasmic; the sequence is LSIKTVTFGL…NIPEHSKGEV (196 aa). Disordered stretches follow at residues 622 to 641 and 648 to 696; these read EYVTSPSRPDGPPGKSFKEP and ASED…LKNS. Polar residues predominate over residues 670 to 679; it reads QPSSSCQSPG.

Belongs to the type I cytokine receptor family. Type 2 subfamily. As to quaternary structure, heterodimer with OSMR. Interacts with JAK1 and STAT3. In terms of processing, N-glycosylated. As to expression, expressed in a subset of dorsal root ganglia neurons. Expressed in spinal cord and trigeminal ganglion (at protein level). Expressed in skin, testis, bone marrow and thymus.

The protein resides in the cell membrane. The protein localises to the presynaptic cell membrane. Its subcellular location is the cell projection. It localises to the axon. In terms of biological role, associates with OSMR to form the interleukin-31 receptor which activates STAT3 and to a lower extent STAT1 and STAT5. May function in skin immunity. Mediates IL31-induced itch, probably in a manner dependent on cation channels TRPA1 and TRPV1. Positively regulates numbers and cycling status of immature subsets of myeloid progenitor cells in bone marrow in vivo and enhances myeloid progenitor cell survival in vitro. This is Interleukin-31 receptor subunit alpha (Il31ra) from Mus musculus (Mouse).